A 306-amino-acid polypeptide reads, in one-letter code: Ornithine carbamoyltransferase (306 aa).

Carbamoyl phosphate-binding positions include 51 to 54 (STRT), Gln-78, Arg-102, and 129 to 132 (HPVQ). L-ornithine is bound by residues Asn-159, Asp-223, and 227–228 (SM). Carbamoyl phosphate contacts are provided by residues 263 to 264 (CL) and Arg-291.

This sequence belongs to the aspartate/ornithine carbamoyltransferase superfamily. OTCase family.

It is found in the cytoplasm. It catalyses the reaction carbamoyl phosphate + L-ornithine = L-citrulline + phosphate + H(+). Its pathway is amino-acid biosynthesis; L-arginine biosynthesis; L-arginine from L-ornithine and carbamoyl phosphate: step 1/3. In terms of biological role, reversibly catalyzes the transfer of the carbamoyl group from carbamoyl phosphate (CP) to the N(epsilon) atom of ornithine (ORN) to produce L-citrulline. This chain is Ornithine carbamoyltransferase, found in Sulfurovum sp. (strain NBC37-1).